The sequence spans 84 residues: Small ribosomal subunit protein bS20 (84 aa).

Belongs to the bacterial ribosomal protein bS20 family.

Its function is as follows. Binds directly to 16S ribosomal RNA. The protein is Small ribosomal subunit protein bS20 of Phocaeicola vulgatus (strain ATCC 8482 / DSM 1447 / JCM 5826 / CCUG 4940 / NBRC 14291 / NCTC 11154) (Bacteroides vulgatus).